Consider the following 172-residue polypeptide: Melanocortin-2 receptor accessory protein (172 aa).

A helical membrane pass occupies residues 38-58 (IVIAFWVSLAAFVVLLFLILL). Disordered stretches follow at residues 105–136 (QAQA…LGGF) and 151–172 (GPLV…QLQS).

This sequence belongs to the MRAP family. In terms of assembly, homodimer and heterodimer. Forms antiparallel homodimers and heterodimers with MRAP2. Interacts with MC1R, MC2R, MC3R, MC4R and MC5R. Expressed in adrenal cortex, testis, breast, thyroid, lymph node, ovary and fat. Expressed in adipose tissues.

It is found in the cell membrane. The protein localises to the endoplasmic reticulum membrane. Its function is as follows. Modulator of melanocortin receptors (MC1R, MC2R, MC3R, MC4R and MC5R). Acts by increasing ligand-sensitivity of melanocortin receptors and enhancing generation of cAMP by the receptors. Required both for MC2R trafficking to the cell surface of adrenal cells and for signaling in response to corticotropin (ACTH). May be involved in the intracellular trafficking pathways in adipocyte cells. This is Melanocortin-2 receptor accessory protein (MRAP) from Homo sapiens (Human).